Reading from the N-terminus, the 148-residue chain is Arginine repressor (148 aa).

This sequence belongs to the ArgR family.

The protein localises to the cytoplasm. The protein operates within amino-acid biosynthesis; L-arginine biosynthesis [regulation]. Regulates arginine biosynthesis genes. This Chlorobium phaeobacteroides (strain BS1) protein is Arginine repressor.